A 247-amino-acid chain; its full sequence is Peroxisomal membrane protein 11A (247 aa).

Residues 1 to 83 are Cytoplasmic-facing; sequence MDAFTRFTNQ…SIHATDLVPR (83 aa). The helical transmembrane segment at 84 to 105 threads the bilayer; it reads LCLTLANLNRVIYFICDTILWV. At 106–219 the chain is on the lumenal side; sequence RSVGLTSGIN…DQLGIYKSNP (114 aa). Residues 220–239 traverse the membrane as a helical segment; it reads GIIGLGGLVSSIAGMITVAY. The tract at residues 220-239 is required for homodimerization, interaction with PEX11G, and peroxisomal localization; the sequence is GIIGLGGLVSSIAGMITVAY. Residues 240–247 are Cytoplasmic-facing; that stretch reads PQMKLKTR.

Belongs to the peroxin-11 family. Homodimer. Heterodimer with PEX11G. Probably interacts with COPB2 and COPA. Interacts with PEX19. Interacts with FIS1. Post-translationally, seems not to be N-glycosylated.

Its subcellular location is the peroxisome membrane. May be involved in peroxisomal proliferation and may regulate peroxisomes division. May mediate binding of coatomer proteins to the peroxisomal membrane. Promotes membrane protrusion and elongation on the peroxisomal surface. This Homo sapiens (Human) protein is Peroxisomal membrane protein 11A (PEX11A).